Consider the following 220-residue polypeptide: MPGPDSFDARSRISRFRPHSAADLVRRNTRVTVTQVPQVGHTGGLAQRYARALYDLASEQGNLSDVLGEVKALRAAIAESDDLRKFLADARMDIRQGRTVSNVLMSKLGFGDVLRRFVGVIADNRRLPDLASILDGVLALDSALRGEVVAEVRSAQPLTDTQRSQLQARLAEAGYSRVSMTERTDAALLGGMTVRIGSTLFDTSIAGRLTRLQNAMKGAA.

Belongs to the ATPase delta chain family. As to quaternary structure, F-type ATPases have 2 components, F(1) - the catalytic core - and F(0) - the membrane proton channel. F(1) has five subunits: alpha(3), beta(3), gamma(1), delta(1), epsilon(1). F(0) has three main subunits: a(1), b(2) and c(10-14). The alpha and beta chains form an alternating ring which encloses part of the gamma chain. F(1) is attached to F(0) by a central stalk formed by the gamma and epsilon chains, while a peripheral stalk is formed by the delta and b chains.

The protein localises to the cell inner membrane. In terms of biological role, f(1)F(0) ATP synthase produces ATP from ADP in the presence of a proton or sodium gradient. F-type ATPases consist of two structural domains, F(1) containing the extramembraneous catalytic core and F(0) containing the membrane proton channel, linked together by a central stalk and a peripheral stalk. During catalysis, ATP synthesis in the catalytic domain of F(1) is coupled via a rotary mechanism of the central stalk subunits to proton translocation. This protein is part of the stalk that links CF(0) to CF(1). It either transmits conformational changes from CF(0) to CF(1) or is implicated in proton conduction. This chain is ATP synthase subunit delta, found in Gluconobacter oxydans (strain 621H) (Gluconobacter suboxydans).